The following is a 185-amino-acid chain: Large ribosomal subunit protein uL5 (185 aa).

The protein belongs to the universal ribosomal protein uL5 family. Part of the 50S ribosomal subunit; part of the 5S rRNA/L5/L18/L25 subcomplex. Contacts the 5S rRNA and the P site tRNA. Forms a bridge to the 30S subunit in the 70S ribosome.

This is one of the proteins that bind and probably mediate the attachment of the 5S RNA into the large ribosomal subunit, where it forms part of the central protuberance. In the 70S ribosome it contacts protein S13 of the 30S subunit (bridge B1b), connecting the 2 subunits; this bridge is implicated in subunit movement. Contacts the P site tRNA; the 5S rRNA and some of its associated proteins might help stabilize positioning of ribosome-bound tRNAs. The chain is Large ribosomal subunit protein uL5 from Bartonella bacilliformis (strain ATCC 35685 / KC583 / Herrer 020/F12,63).